Consider the following 506-residue polypeptide: Histidine--tRNA ligase, mitochondrial (506 aa).

A mitochondrion-targeting transit peptide spans 1-33; that stretch reads MPQLGLLPGRAWTVLLGLLRPPPGALCIRAVRS. Phosphoserine is present on serine 67. L-histidine contacts are provided by residues 131–133, arginine 158, glutamine 174, aspartate 178, arginine 327, and 331–332; these read DLT and YY. An N6-acetyllysine modification is found at lysine 444.

It belongs to the class-II aminoacyl-tRNA synthetase family. As to quaternary structure, homodimer.

Its subcellular location is the mitochondrion. It catalyses the reaction tRNA(His) + L-histidine + ATP = L-histidyl-tRNA(His) + AMP + diphosphate + H(+). Its function is as follows. Mitochondrial aminoacyl-tRNA synthetase that catalyzes the ATP-dependent ligation of histidine to the 3'-end of its cognate tRNA, via the formation of an aminoacyl-adenylate intermediate (His-AMP). This is Histidine--tRNA ligase, mitochondrial (HARS2) from Bos taurus (Bovine).